A 96-amino-acid chain; its full sequence is Protein RnfH (96 aa).

Belongs to the UPF0125 (RnfH) family.

The chain is Protein RnfH from Hahella chejuensis (strain KCTC 2396).